The sequence spans 122 residues: Large ribosomal subunit protein uL18 (122 aa).

It belongs to the universal ribosomal protein uL18 family. Part of the 50S ribosomal subunit; part of the 5S rRNA/L5/L18/L25 subcomplex. Contacts the 5S and 23S rRNAs.

Its function is as follows. This is one of the proteins that bind and probably mediate the attachment of the 5S RNA into the large ribosomal subunit, where it forms part of the central protuberance. This is Large ribosomal subunit protein uL18 from Trichlorobacter lovleyi (strain ATCC BAA-1151 / DSM 17278 / SZ) (Geobacter lovleyi).